A 405-amino-acid polypeptide reads, in one-letter code: Alpha-1-antiproteinase S (405 aa).

The N-terminal stretch at 1-24 is a signal peptide; the sequence is MPSAIPRGLLLLAGLCCLVFGIMA. N57, N94, N157, and N258 each carry an N-linked (GlcNAc...) asparagine glycan. Residues 360–379 form an RCL region; that stretch reads GATMMEFMPMSLPEDLSFNK.

The protein belongs to the serpin family.

It localises to the secreted. Its function is as follows. Inhibits elastase, chymotrypsin, cathepsin G, plasmin, and trypsin. The sequence is that of Alpha-1-antiproteinase S from Cavia porcellus (Guinea pig).